The chain runs to 492 residues: 2-succinylbenzoate--CoA ligase (492 aa).

The protein belongs to the ATP-dependent AMP-binding enzyme family. MenE subfamily.

It carries out the reaction 2-succinylbenzoate + ATP + CoA = 2-succinylbenzoyl-CoA + AMP + diphosphate. It functions in the pathway quinol/quinone metabolism; 1,4-dihydroxy-2-naphthoate biosynthesis; 1,4-dihydroxy-2-naphthoate from chorismate: step 5/7. Its pathway is quinol/quinone metabolism; menaquinone biosynthesis. Converts 2-succinylbenzoate (OSB) to 2-succinylbenzoyl-CoA (OSB-CoA). This Staphylococcus aureus (strain USA300 / TCH1516) protein is 2-succinylbenzoate--CoA ligase.